The primary structure comprises 563 residues: Adenine deaminase (563 aa).

It belongs to the metallo-dependent hydrolases superfamily. Adenine deaminase family. The cofactor is Mn(2+).

The catalysed reaction is adenine + H2O + H(+) = hypoxanthine + NH4(+). The sequence is that of Adenine deaminase from Lactiplantibacillus plantarum (strain ATCC BAA-793 / NCIMB 8826 / WCFS1) (Lactobacillus plantarum).